Reading from the N-terminus, the 434-residue chain is Pancreatic lipase-related protein 2 (434 aa).

A disulfide bond links cysteine 4 and cysteine 10. The tract at residues isoleucine 76–leucine 88 is required for galactolipase activity. A disulfide bridge connects residues cysteine 92 and cysteine 103. Serine 154 (nucleophile) is an active-site residue. The active-site Charge relay system is aspartate 178. Ca(2+) contacts are provided by glutamate 189, arginine 192, aspartate 194, and aspartate 197. Cysteine 239 and cysteine 245 are disulfide-bonded. The segment at lysine 240–serine 244 is required for galactolipase activity. Residue histidine 247 is the Charge relay system of the active site. Disulfide bonds link cysteine 269/cysteine 280 and cysteine 283/cysteine 288. Asparagine 318 carries N-linked (GlcNAc...) asparagine glycosylation. Positions tryptophan 322–cysteine 434 constitute a PLAT domain. The cysteines at positions 418 and 434 are disulfide-linked.

It belongs to the AB hydrolase superfamily. Lipase family. Pancreas.

It localises to the secreted. The protein resides in the zymogen granule membrane. Its subcellular location is the cell projection. The protein localises to the neuron projection. The catalysed reaction is a triacylglycerol + H2O = a diacylglycerol + a fatty acid + H(+). The enzyme catalyses a 1,2-diacyl-3-O-(beta-D-galactosyl)-sn-glycerol + 2 H2O = 3-beta-D-galactosyl-sn-glycerol + 2 a fatty acid + 2 H(+). It carries out the reaction 1,2,3-tri-(9Z-octadecenoyl)-glycerol + H2O = di-(9Z)-octadecenoylglycerol + (9Z)-octadecenoate + H(+). It catalyses the reaction di-(9Z)-octadecenoylglycerol + H2O = (9Z-octadecenoyl)-glycerol + (9Z)-octadecenoate + H(+). The catalysed reaction is (9Z-octadecenoyl)-glycerol + H2O = glycerol + (9Z)-octadecenoate + H(+). The enzyme catalyses 1-(9Z-octadecenoyl)-glycerol + H2O = glycerol + (9Z)-octadecenoate + H(+). It carries out the reaction 1,2,3-tripropanoylglycerol + H2O = dipropanoylglycerol + propanoate + H(+). It catalyses the reaction 1,2,3-tributanoylglycerol + H2O = dibutanoylglycerol + butanoate + H(+). The catalysed reaction is 1,2,3-trioctanoylglycerol + H2O = dioctanoylglycerol + octanoate + H(+). The enzyme catalyses 1,2-didecanoylglycerol + H2O = decanoylglycerol + decanoate + H(+). It carries out the reaction long chain 1,2-diacyl-3-O-beta-D-galactosyl-sn-glycerol + H2O = long chain acyl-3-O-beta-D-galactosyl-sn-glycerol + a fatty acid + H(+). It catalyses the reaction 1,2-dioctanoyl-3-O-beta-D-galactosyl-sn-glycerol + H2O = octanoyl-3-(beta-D-galactosyl)-sn-glycerol + octanoate + H(+). The catalysed reaction is 1,2-didodecanoyl-3-beta-D-galactosyl-sn-glycerol + H2O = dodecanoyl-3-beta-D-galactosyl-sn-glycerol + dodecanoate + H(+). The enzyme catalyses 1-beta-D-galactosyl-2,3-didodecanoyl-sn-glycerol + H2O = 1-beta-D-galactosyl-dodecanoyl-sn-glycerol + dodecanoate + H(+). It carries out the reaction a 1,2-diacyl-3-O-[alpha-D-galactosyl-(1-&gt;6)-beta-D-galactosyl]-sn-glycerol + H2O = acyl-3-O-[alpha-D-galactosyl-(1-&gt;6)-beta-D-galactosyl]-sn-glycerol + a fatty acid + H(+). It catalyses the reaction long chain 1,2-diacyl-3-O-[alpha-D-galactosyl-(1-&gt;6)-beta-D-galactosyl]-sn-glycerol + H2O = long chain acyl-3-O-[alpha-D-galactosyl-(1-&gt;6)-beta-D-galactosyl]-sn-glycerol + a fatty acid + H(+). The catalysed reaction is 1,2-dioctanoyl-3-O-[alpha-D-galactosyl-(1-&gt;6)-beta-D-galactosyl]-sn-glycerol + H2O = octanoyl-3-O-[alpha-D-galactosyl-(1-&gt;6)-beta-D-galactosyl]-sn-glycerol + octanoate + H(+). The enzyme catalyses 1,2-didodecanoyl-3-O-[alpha-D-galactosyl-(1-&gt;6)-beta-D-galactosyl]-sn-glycerol + H2O = dodecanoyl-3-O-[alpha-D-galactosyl-(1-&gt;6)-beta-D-galactosyl]-sn-glycerol + dodecanoate + H(+). It carries out the reaction a 1,2-diacyl-sn-glycero-3-phosphocholine + H2O = a monoacyl-sn-glycero-3-phosphocholine + a fatty acid + H(+). Its pathway is glycerolipid metabolism; triacylglycerol degradation. It participates in glycolipid metabolism. With respect to regulation, CLPS stimulates triacylglycerol lipase activity. Not inhibited by bile salts. Lipase that primarily hydrolyzes triglycerides and galactosylglycerides. In neonates, may play a major role in pancreatic digestion of dietary fats such as milk fat globules enriched in long-chain triglycerides. Hydrolyzes short-, medium- and long-chain fatty acyls in triglycerides without apparent positional specificity. Can completely deacylate triacylglycerols. When the liver matures and bile salt synthesis increases, likely functions mainly as a galactolipase and monoacylglycerol lipase. Hydrolyzes monogalactosyldiglycerols (MGDG) and digalactosyldiacylglycerols (DGDG) present in a plant-based diet, releasing long-chain polyunsaturated fatty acids. Hydrolyzes medium- and long-chain fatty acyls in galactolipids. May act together with LIPF to hydrolyze partially digested triglycerides. Hydrolyzes long-chain monoglycerides with high efficiency. In cytotoxic T cells, contributes to perforin-dependent cell lysis, but is unlikely to mediate direct cytotoxicity. Also has low phospholipase activity. In neurons, required for the localization of the phospholipid 1-oleoyl-2-palmitoyl-PC (OPPC) to neurite tips through acyl chain remodeling of membrane phospholipids. The resulting OPPC-rich lipid membrane domain recruits the t-SNARE protein STX4 by selectively interacting with the STX4 transmembrane domain and this promotes surface expression of the dopamine transporter SLC6A3/DAT at neurite tips by facilitating fusion of SLC6A3-containing transport vesicles with the plasma membrane. In Cavia porcellus (Guinea pig), this protein is Pancreatic lipase-related protein 2.